Reading from the N-terminus, the 276-residue chain is Rhomboid protease GlpG (276 aa).

6 helical membrane-spanning segments follow: residues 96–116 (VTWLIMIACILVFVVMSIVGA), 142–162 (AFMHFSLMHILFNLLWWWYIG), 169–189 (LGSGKLIVITVISALLSGYVQ), 192–212 (FSGPWFGGLSGVVYALMGYAW), 229–249 (LIAFALIWIVAGWFDVFGMSM), and 250–270 (ANGAHIAGLAVGLAMAFADTV). The active-site Nucleophile is S201. H254 is a catalytic residue.

The protein belongs to the peptidase S54 family.

The protein resides in the cell inner membrane. It carries out the reaction Cleaves type-1 transmembrane domains using a catalytic dyad composed of serine and histidine that are contributed by different transmembrane domains.. In terms of biological role, rhomboid-type serine protease that catalyzes intramembrane proteolysis. In Citrobacter koseri (strain ATCC BAA-895 / CDC 4225-83 / SGSC4696), this protein is Rhomboid protease GlpG.